Consider the following 482-residue polypeptide: Arginine/ornithine antiporter (482 aa).

Over 1-10 (MSQESSQKLR) the chain is Cytoplasmic. The chain crosses the membrane as a helical span at residues 11-31 (LGALTALVVGSMIGGGIFSLP). The Periplasmic portion of the chain corresponds to 32 to 40 (QNMAASADV). A helical transmembrane segment spans residues 41 to 61 (GAVLIGWAITAVGMLTLAFVF). Residues 62–100 (QTLANRKPELDGGVYAYAKAGFGDYMGFSSAWGYWISAW) lie on the Cytoplasmic side of the membrane. A helical transmembrane segment spans residues 101-121 (LGNVGYFVLLFSTLGYFFPIF). Residues 122–124 (GKG) are Periplasmic-facing. Residues 125-145 (DTVAAIVCASVLLWALHFLVL) form a helical membrane-spanning segment. Residues 146–156 (RGIKEAAFINT) are Cytoplasmic-facing. The chain crosses the membrane as a helical span at residues 157 to 177 (VTTVAKVVPLFLFILICLFAF). Residues 178 to 202 (KLDIFTADIWGKSNPDLGSVMNQVR) lie on the Periplasmic side of the membrane. The helical transmembrane segment at 203–223 (NMMLVTVWVFIGIEGASIFSS) threads the bilayer. The Cytoplasmic portion of the chain corresponds to 224–235 (RAEKRSDVGKAT). A helical membrane pass occupies residues 236-256 (VIGFITVLLLLVLVNVLSMGV). The Periplasmic portion of the chain corresponds to 257–283 (MTQPELAKLQNPSMALVLEHVVGHWGA). The helical transmembrane segment at 284–304 (VLISVGLLISLLGALLSWVLL) threads the bilayer. The Cytoplasmic segment spans residues 305-333 (CAEIMFAAAKDHTMPEFLRRENANQVPAN). The chain crosses the membrane as a helical span at residues 334 to 354 (ALWLTNICVQVFLVVVFFTSG). Topologically, residues 355–365 (DPDGMDPYTKM) are periplasmic. The helical transmembrane segment at 366-386 (LLLATSMILIPYFWSAAYGLL) threads the bilayer. Over 387–403 (LTLKGETYENDARERSK) the chain is Cytoplasmic. Residues 404–424 (DLVIAGIAVAYAVWLLYAGGL) traverse the membrane as a helical segment. A topological domain (periplasmic) is located at residue Lys-425. The helical transmembrane segment at 426-446 (YLLLSALLYAPGAILFAKAKH) threads the bilayer. The Cytoplasmic portion of the chain corresponds to 447–458 (EVGQPIFTGIEK). Residues 459 to 479 (LIFAAVVIGALVAAYGLYDGF) form a helical membrane-spanning segment. Topologically, residues 480-482 (LTL) are periplasmic.

The protein belongs to the amino acid-polyamine-organocation (APC) superfamily. Basic amino acid/polyamine antiporter (APA) (TC 2.A.3.2) family.

It localises to the cell inner membrane. It catalyses the reaction L-ornithine(in) + L-arginine(out) = L-ornithine(out) + L-arginine(in). Catalyzes electroneutral exchange between arginine and ornithine to allow high-efficiency energy conversion in the arginine deiminase pathway. Also mediates the proton motive force-driven uptake of arginine and ornithine, but the exchange is several orders of magnitude faster than the proton motive force-driven transport. This is Arginine/ornithine antiporter from Pseudomonas aeruginosa (strain ATCC 15692 / DSM 22644 / CIP 104116 / JCM 14847 / LMG 12228 / 1C / PRS 101 / PAO1).